A 135-amino-acid polypeptide reads, in one-letter code: Ribonuclease P protein component (135 aa).

This sequence belongs to the RnpA family. In terms of assembly, consists of a catalytic RNA component (M1 or rnpB) and a protein subunit.

It carries out the reaction Endonucleolytic cleavage of RNA, removing 5'-extranucleotides from tRNA precursor.. Its function is as follows. RNaseP catalyzes the removal of the 5'-leader sequence from pre-tRNA to produce the mature 5'-terminus. It can also cleave other RNA substrates such as 4.5S RNA. The protein component plays an auxiliary but essential role in vivo by binding to the 5'-leader sequence and broadening the substrate specificity of the ribozyme. This Xylella fastidiosa (strain 9a5c) protein is Ribonuclease P protein component.